A 339-amino-acid polypeptide reads, in one-letter code: MVIQKNWQELIKPNKLQVTTGDDPKRVATVVAEPLERGFGTTLGNALRRVLLSSLQGAAVTSVQIDGVLHEFSSIPGVREDVTDIVLNIKTIAIRSQTDAPKRMTLRKTGPGLVTAGDIGTVGDIQILNPDLVICTLDDGAEIRMEFTVATGKGYVPAERNRPEDAPIGLIPVDSLFSPVTKVSYRVETTREGQDLDKDKLTMTVETNGAVSPEDALAYAARIIQDQLQVFVNFEDPRKEEAAPLAPQLPFNPALLKKVDELELSVRSANCLKNDNIVYIGDLIQKSEGEMLRTPNFGRKSLNEIKEVLAGMGLHLGMDIPGWPPENIEDLAKRFEEHY.

Residues 1–235 (MVIQKNWQEL…DQLQVFVNFE (235 aa)) form an alpha N-terminal domain (alpha-NTD) region. Positions 251–339 (FNPALLKKVD…DLAKRFEEHY (89 aa)) are alpha C-terminal domain (alpha-CTD).

It belongs to the RNA polymerase alpha chain family. In terms of assembly, homodimer. The RNAP catalytic core consists of 2 alpha, 1 beta, 1 beta' and 1 omega subunit. When a sigma factor is associated with the core the holoenzyme is formed, which can initiate transcription.

The catalysed reaction is RNA(n) + a ribonucleoside 5'-triphosphate = RNA(n+1) + diphosphate. DNA-dependent RNA polymerase catalyzes the transcription of DNA into RNA using the four ribonucleoside triphosphates as substrates. The protein is DNA-directed RNA polymerase subunit alpha of Methylobacterium radiotolerans (strain ATCC 27329 / DSM 1819 / JCM 2831 / NBRC 15690 / NCIMB 10815 / 0-1).